Here is a 316-residue protein sequence, read N- to C-terminus: MSKQFGKVGVLYGGRSAEREVSLMSGKGVHEALLSAGVDAHLFDTGERSLADLAAAGFERVFIALHGRYGEDGTLQGALELLGIPYTGSGPLASSLSMDKIMTKRVWLQHGLPTPAFEVLGGSTELRLVPDRLGLPLILKPPHEGSTVGITKVAGYSDMKAAYELAARFDAEVLAEQFITGRELTVAVLGSGAAARALPVIEIVAPGGNYDYEHKYFSDDTQYFCPADLPADVAADVAAVAERAYAALGCEGWGRVDFILDRENRPWLLEMNTSPGMTGHSLVPMAARAVGMSYADLCVAILAEAACKVRSPARQD.

The region spanning 104 to 303 is the ATP-grasp domain; it reads KRVWLQHGLP…YADLCVAILA (200 aa). 130-185 serves as a coordination point for ATP; that stretch reads PDRLGLPLILKPPHEGSTVGITKVAGYSDMKAAYELAARFDAEVLAEQFITGRELT. Mg(2+) is bound by residues aspartate 257, glutamate 270, and asparagine 272.

Belongs to the D-alanine--D-alanine ligase family. Mg(2+) serves as cofactor. The cofactor is Mn(2+).

Its subcellular location is the cytoplasm. The enzyme catalyses 2 D-alanine + ATP = D-alanyl-D-alanine + ADP + phosphate + H(+). The protein operates within cell wall biogenesis; peptidoglycan biosynthesis. Functionally, cell wall formation. The chain is D-alanine--D-alanine ligase from Bordetella bronchiseptica (strain ATCC BAA-588 / NCTC 13252 / RB50) (Alcaligenes bronchisepticus).